The following is a 216-amino-acid chain: Gamma-glutamylcyclotransferase 2-1 (216 aa).

5-10 provides a ligand contact to substrate; that stretch reads VFGYGS. The Proton acceptor role is filled by E87.

This sequence belongs to the gamma-glutamylcyclotransferase family. Requires Mn(2+) as cofactor. Expressed in the central vascular bundle of roots, leaf veins, hydathodes, cauline leaves, shoot apex, sepal veins, flower receptacles and developing seeds.

It is found in the cytoplasm. The enzyme catalyses an alpha-(gamma-L-glutamyl)-L-amino acid = 5-oxo-L-proline + an L-alpha-amino acid. Functionally, catalyzes the formation of 5-oxoproline from gamma-glutamyl dipeptides and plays a significant role in glutathione (GSH) homeostasis. Converts both GSH and gamma-glutamyl-L-alanine to 5-oxoproline in vitro. Plays a role in detoxification of heavy metals and metalloids by recycling glutamate and maintaining GSH homeostasis. The polypeptide is Gamma-glutamylcyclotransferase 2-1 (Arabidopsis thaliana (Mouse-ear cress)).